The primary structure comprises 600 residues: Glutamine--fructose-6-phosphate aminotransferase [isomerizing] (600 aa).

Cys-2 (nucleophile; for GATase activity) is an active-site residue. The 216-residue stretch at Cys-2–Glu-217 folds into the Glutamine amidotransferase type-2 domain. 2 SIS domains span residues Ile-283–Glu-422 and Leu-452–Pro-590. The active-site For Fru-6P isomerization activity is Lys-595.

As to quaternary structure, homodimer.

The protein resides in the cytoplasm. It catalyses the reaction D-fructose 6-phosphate + L-glutamine = D-glucosamine 6-phosphate + L-glutamate. Its function is as follows. Catalyzes the first step in hexosamine metabolism, converting fructose-6P into glucosamine-6P using glutamine as a nitrogen source. This chain is Glutamine--fructose-6-phosphate aminotransferase [isomerizing], found in Bacillus cereus (strain ATCC 10987 / NRS 248).